The primary structure comprises 504 residues: Anaerobic nitric oxide reductase transcription regulator NorR (504 aa).

Asp57 is modified (4-aspartylphosphate). Residues 187-416 (MIGLSPGMTQ…LEHAIHRAVV (230 aa)) enclose the Sigma-54 factor interaction domain. Residues 215–222 (GETGTGKE) and 278–287 (ADNGTLFLDE) contribute to the ATP site. The segment at residues 479 to 498 (WAACARMLETDVANLHRLAK) is a DNA-binding region (H-T-H motif).

The protein operates within nitrogen metabolism; nitric oxide reduction. Its function is as follows. Required for the expression of anaerobic nitric oxide (NO) reductase, acts as a transcriptional activator for at least the norVW operon. Activation also requires sigma-54. The sequence is that of Anaerobic nitric oxide reductase transcription regulator NorR from Escherichia coli O8 (strain IAI1).